The sequence spans 326 residues: Phosphatidylinositol:ceramide inositolphosphotransferase (326 aa).

6 helical membrane-spanning segments follow: residues 33–53, 82–102, 115–135, 169–189, 199–219, and 222–242; these read LLLA…GVHY, SVFT…FIYH, VLAF…STQL, VLFG…LVFV, RLIK…IIAS, and HYSV…FFID. The active site involves His-181. Active-site residues include His-222 and Asp-226. Residues 306–326 are disordered; that stretch reads MNGKHGEDINHTLSDATPNGT. Polar residues predominate over residues 316–326; sequence HTLSDATPNGT.

Belongs to the sphingomyelin synthase family.

The protein resides in the golgi apparatus. It is found in the trans-Golgi network membrane. Catalyzes the transfer of the phosphorylinositol group from phosphatidylinositol (PI) to phytoceramide, an essential step in sphingolipid biosynthesis. May play an important role in modulating plant programmed cell death (PCD) associated with defense (e.g. toward Golovinomyces cichoracearum) by promoting sphingolipid metabolism and regulating ceramide accumulation. The chain is Phosphatidylinositol:ceramide inositolphosphotransferase (ERH1) from Oryza sativa subsp. indica (Rice).